Consider the following 129-residue polypeptide: Follitropin subunit beta (129 aa).

The first 20 residues, 1–20, serve as a signal peptide directing secretion; the sequence is MKTLQFFFLFCCWKAICCNS. 6 disulfides stabilise this stretch: Cys21-Cys69, Cys35-Cys84, Cys38-Cys122, Cys46-Cys100, Cys50-Cys102, and Cys105-Cys112. Residues Asn25 and Asn42 are each glycosylated (N-linked (GlcNAc...) asparagine).

It belongs to the glycoprotein hormones subunit beta family. Heterodimer. The active follitropin is a heterodimer composed of an alpha chain/CGA shared with other hormones and a unique beta chain/FSHB shown here.

The protein resides in the secreted. Functionally, together with the alpha chain CGA constitutes follitropin, the follicle-stimulating hormone, and provides its biological specificity to the hormone heterodimer. Binds FSHR, a G protein-coupled receptor, on target cells to activate downstream signaling pathways. Follitropin is involved in follicle development and spermatogenesis in reproductive organs. The chain is Follitropin subunit beta (FSHB) from Gorilla gorilla gorilla (Western lowland gorilla).